We begin with the raw amino-acid sequence, 597 residues long: Phosphomethylpyrimidine synthase (597 aa).

Substrate-binding positions include Asn207, Met236, Tyr265, His301, 321–323 (SRG), 362–365 (DGLR), and Glu401. His405 is a binding site for Zn(2+). Tyr428 serves as a coordination point for substrate. His469 contacts Zn(2+). Residues Cys549, Cys552, and Cys557 each coordinate [4Fe-4S] cluster.

The protein belongs to the ThiC family. Homodimer. [4Fe-4S] cluster is required as a cofactor.

It catalyses the reaction 5-amino-1-(5-phospho-beta-D-ribosyl)imidazole + S-adenosyl-L-methionine = 4-amino-2-methyl-5-(phosphooxymethyl)pyrimidine + CO + 5'-deoxyadenosine + formate + L-methionine + 3 H(+). It participates in cofactor biosynthesis; thiamine diphosphate biosynthesis. Catalyzes the synthesis of the hydroxymethylpyrimidine phosphate (HMP-P) moiety of thiamine from aminoimidazole ribotide (AIR) in a radical S-adenosyl-L-methionine (SAM)-dependent reaction. The chain is Phosphomethylpyrimidine synthase from Gluconobacter oxydans (strain 621H) (Gluconobacter suboxydans).